Here is a 76-residue protein sequence, read N- to C-terminus: Exodeoxyribonuclease 7 small subunit (76 aa).

It belongs to the XseB family. In terms of assembly, heterooligomer composed of large and small subunits.

The protein resides in the cytoplasm. It catalyses the reaction Exonucleolytic cleavage in either 5'- to 3'- or 3'- to 5'-direction to yield nucleoside 5'-phosphates.. Bidirectionally degrades single-stranded DNA into large acid-insoluble oligonucleotides, which are then degraded further into small acid-soluble oligonucleotides. This is Exodeoxyribonuclease 7 small subunit from Bacillus cereus (strain ATCC 14579 / DSM 31 / CCUG 7414 / JCM 2152 / NBRC 15305 / NCIMB 9373 / NCTC 2599 / NRRL B-3711).